A 615-amino-acid polypeptide reads, in one-letter code: Granule-bound starch synthase 1, chloroplastic/amyloplastic (615 aa).

Residues 1 to 70 (MAALVTSQLA…DRRCLSMVVR (70 aa)) constitute a chloroplast transit peptide. An ADP-alpha-D-glucose-binding site is contributed by Lys91.

It belongs to the glycosyltransferase 1 family. Bacterial/plant glycogen synthase subfamily. In terms of tissue distribution, found in seeds and pollen.

It is found in the plastid. Its subcellular location is the chloroplast. It localises to the amyloplast. The enzyme catalyses an NDP-alpha-D-glucose + [(1-&gt;4)-alpha-D-glucosyl](n) = [(1-&gt;4)-alpha-D-glucosyl](n+1) + a ribonucleoside 5'-diphosphate + H(+). The protein operates within glycan biosynthesis; starch biosynthesis. The protein is Granule-bound starch synthase 1, chloroplastic/amyloplastic (WAXY) of Triticum aestivum (Wheat).